The sequence spans 215 residues: Ribulose-phosphate 3-epimerase (215 aa).

S13 is a binding site for substrate. Positions 38, 40, 69, and 175 each coordinate a divalent metal cation. D40 acts as the Proton acceptor in catalysis. Substrate-binding positions include H69, 175–177, and 196–197; these read DGG and GS. The Proton donor role is filled by D175.

Belongs to the ribulose-phosphate 3-epimerase family. A divalent metal cation is required as a cofactor.

The catalysed reaction is D-ribulose 5-phosphate = D-xylulose 5-phosphate. The protein operates within carbohydrate degradation. Catalyzes the reversible epimerization of D-ribulose 5-phosphate to D-xylulose 5-phosphate. The polypeptide is Ribulose-phosphate 3-epimerase (Mycoplasma pneumoniae (strain ATCC 29342 / M129 / Subtype 1) (Mycoplasmoides pneumoniae)).